The following is a 1092-amino-acid chain: Probable arabinosyltransferase A (1092 aa).

Transmembrane regions (helical) follow at residues 21–43 (IARLIAVVAGIAGVLLCGLVPLL), 214–233 (AVMVLGLACVIGSIVALALL), 249–271 (GLWTWITDTGVIGGLLIWHIVGA), 324–346 (VWMRLPATAAAIATWLIISRCVL), 353–372 (VAANRVAMLTAGATFLAAWL), 382–399 (PLIAFAVITVWMLVENSI), 404–426 (LWPAAVAIVIAMFSVTLAPQGLI), 517–534 (FAVLVLLLCLFGLIMVLL), 541–563 (GAVSGPLWRLCGSTAIGLLLLIL), 568–590 (WAIQFGAFAGLAGALGGVTAFAF), 602–624 (ALYVTALLFILAWATSGLNGWFY), 639–661 (IAHYPVTTIFLVLAIVGGLLAGW), and 682–704 (ALASTPLLIVATIMVVLELGSMV). The tract at residues 772–798 (PSGVSEHLEPEPVGTNPGTPNSEGPVD) is disordered.

This sequence belongs to the emb family.

The protein localises to the cell membrane. In terms of biological role, arabinosyl transferase responsible for the polymerization of arabinose into the arabinan of arabinogalactan. The chain is Probable arabinosyltransferase A (embA) from Mycolicibacterium smegmatis (Mycobacterium smegmatis).